The following is a 363-amino-acid chain: Double-strand-specific pac1 ribonuclease (363 aa).

Disordered regions lie at residues Met1 to Ser35 and Ser92 to Arg138. The span at Asp13–Leu22 shows a compositional bias: low complexity. Residues Arg24 to Ser35 show a composition bias toward basic residues. Phosphoserine is present on Ser122. Residues Ser139–Gln262 form the RNase III domain. The 72-residue stretch at Arg285–Lys356 folds into the DRBM domain.

It depends on Mg(2+) as a cofactor.

It carries out the reaction Endonucleolytic cleavage to 5'-phosphomonoester.. Digests double-stranded RNA. Converts long double-stranded RNAs into short oligonucleotides, leaving 5'-phosphates on their cleavage products. Probably inhibits mating and meiosis by degrading a specific mRNA required for sexual development. The sequence is that of Double-strand-specific pac1 ribonuclease (pac1) from Schizosaccharomyces pombe (strain 972 / ATCC 24843) (Fission yeast).